The following is a 71-amino-acid chain: Cytotoxic linear peptide IsCT2 (71 aa).

Positions 1–23 are cleaved as a signal peptide; it reads MKTQFAILLVALVLFQMFAQSEA. A Phenylalanine amide modification is found at Phe-36. Positions 40–71 are excised as a propeptide; sequence ALNNDLDLDGLDELFDGEISQADVDFLKELMR.

This sequence belongs to the non-disulfide-bridged peptide (NDBP) superfamily. Short antimicrobial peptide (group 4) family. In terms of processing, isCT2F is an enzymatic proteolytic cleavage product of IsCT2 by the proteases present in the venom. Expressed by the venom gland.

The protein localises to the secreted. It localises to the target cell membrane. Functionally, isCT2 shows weak hemolytic activity and antibacterial activity against both Gram-positive and Gram-negative bacteria probably by forming pores in the cell membrane. IsCT2 adopts an amphipathic alpha-helical structure. IsCT2f shows neither hemolytic, nor antibacterial activities, surely due to the fact that it cannot apply amphipathic alpha-helical structure. This is Cytotoxic linear peptide IsCT2 from Opisthacanthus madagascariensis (Scorpion).